The sequence spans 124 residues: Small ribosomal subunit protein uS12 (124 aa).

A disordered region spans residues 1–42; it reads MPTTQQLIRKGRKTEEETSDAPALEGSPQRRGVCTRVYTTTP. Asp-89 is subject to 3-methylthioaspartic acid. Residues 105 to 124 form a disordered region; that stretch reads AGVEERRQGRSKYGTKKPRE. Basic residues predominate over residues 113-124; sequence GRSKYGTKKPRE.

The protein belongs to the universal ribosomal protein uS12 family. In terms of assembly, part of the 30S ribosomal subunit. Contacts proteins S8 and S17. May interact with IF1 in the 30S initiation complex.

In terms of biological role, with S4 and S5 plays an important role in translational accuracy. Functionally, interacts with and stabilizes bases of the 16S rRNA that are involved in tRNA selection in the A site and with the mRNA backbone. Located at the interface of the 30S and 50S subunits, it traverses the body of the 30S subunit contacting proteins on the other side and probably holding the rRNA structure together. The combined cluster of proteins S8, S12 and S17 appears to hold together the shoulder and platform of the 30S subunit. The protein is Small ribosomal subunit protein uS12 of Salinibacter ruber (strain DSM 13855 / M31).